The sequence spans 561 residues: 2-succinyl-5-enolpyruvyl-6-hydroxy-3-cyclohexene-1-carboxylate synthase (561 aa).

Belongs to the TPP enzyme family. MenD subfamily. As to quaternary structure, homodimer. The cofactor is Mg(2+). It depends on Mn(2+) as a cofactor. Thiamine diphosphate is required as a cofactor.

It catalyses the reaction isochorismate + 2-oxoglutarate + H(+) = 5-enolpyruvoyl-6-hydroxy-2-succinyl-cyclohex-3-ene-1-carboxylate + CO2. The protein operates within quinol/quinone metabolism; 1,4-dihydroxy-2-naphthoate biosynthesis; 1,4-dihydroxy-2-naphthoate from chorismate: step 2/7. Its pathway is cofactor biosynthesis; phylloquinone biosynthesis. Its function is as follows. Catalyzes the thiamine diphosphate-dependent decarboxylation of 2-oxoglutarate and the subsequent addition of the resulting succinic semialdehyde-thiamine pyrophosphate anion to isochorismate to yield 2-succinyl-5-enolpyruvyl-6-hydroxy-3-cyclohexene-1-carboxylate (SEPHCHC). The protein is 2-succinyl-5-enolpyruvyl-6-hydroxy-3-cyclohexene-1-carboxylate synthase of Synechococcus sp. (strain CC9605).